A 340-amino-acid chain; its full sequence is KH domain-containing RNA-binding protein QKI (340 aa).

In terms of domain architecture, KH spans 87–153 (YVPVKEYPDF…WEHLNEDLHV (67 aa)). The SH3-binding signature appears at 275-278 (PPGP). Residues 323–329 (RVHPYQR) carry the Nuclear localization signal motif.

It belongs to the quaking family. In terms of assembly, homodimer; does not require RNA to homodimerize.

It is found in the cytoplasm. The protein resides in the nucleus. In terms of biological role, RNA reader protein, which recognizes and binds specific RNAs, thereby regulating RNA metabolic processes, such as pre-mRNA splicing, circular RNA (circRNA) formation, mRNA export, mRNA stability and/or translation. Involved in various cellular processes, such as mRNA storage into stress granules, apoptosis, interferon response, glial cell fate and development. Binds to the 5'-NACUAAY-N(1,20)-UAAY-3' RNA core sequence. Acts as a mRNA modification reader that specifically recognizes and binds mRNA transcripts modified by internal N(7)-methylguanine (m7G). Promotes the formation of circular RNAs (circRNAs): acts by binding to sites flanking circRNA-forming exons. CircRNAs are produced by back-splicing circularization of pre-mRNAs. Required to protect and promote stability of mRNAs which promotes oligodendrocyte differentiation. Acts as an important regulator of muscle development. The sequence is that of KH domain-containing RNA-binding protein QKI from Gallus gallus (Chicken).